The following is a 340-amino-acid chain: Phosphoribosylformylglycinamidine cyclo-ligase (340 aa).

The protein belongs to the AIR synthase family.

It localises to the cytoplasm. It carries out the reaction 2-formamido-N(1)-(5-O-phospho-beta-D-ribosyl)acetamidine + ATP = 5-amino-1-(5-phospho-beta-D-ribosyl)imidazole + ADP + phosphate + H(+). It participates in purine metabolism; IMP biosynthesis via de novo pathway; 5-amino-1-(5-phospho-D-ribosyl)imidazole from N(2)-formyl-N(1)-(5-phospho-D-ribosyl)glycinamide: step 2/2. The polypeptide is Phosphoribosylformylglycinamidine cyclo-ligase (Streptococcus pyogenes serotype M12 (strain MGAS2096)).